Consider the following 220-residue polypeptide: Charged multivesicular body protein 4b (220 aa).

Disordered regions lie at residues 1–22 (MSLF…SPQE) and 180–220 (EIGD…WAAN). Coiled-coil stretches lie at residues 21–88 (QEAI…STIE) and 123–181 (IDKV…LLEI).

Belongs to the SNF7 family. As to quaternary structure, probable core component of the endosomal sorting required for transport complex III (ESCRT-III). ESCRT-III components are thought to multimerize to form a flat lattice on the perimeter membrane of the endosome.

It localises to the cytoplasm. The protein resides in the cytosol. It is found in the late endosome membrane. The protein localises to the midbody. Probable core component of the endosomal sorting required for transport complex III (ESCRT-III) which is involved in multivesicular bodies (MVBs) formation and sorting of endosomal cargo proteins into MVBs. MVBs contain intraluminal vesicles (ILVs) that are generated by invagination and scission from the limiting membrane of the endosome and mostly are delivered to lysosomes enabling degradation of membrane proteins, such as stimulated growth factor receptors, lysosomal enzymes and lipids. The polypeptide is Charged multivesicular body protein 4b (chmp4b) (Danio rerio (Zebrafish)).